The sequence spans 149 residues: Arginine repressor (149 aa).

The protein belongs to the ArgR family.

Its subcellular location is the cytoplasm. The protein operates within amino-acid biosynthesis; L-arginine biosynthesis [regulation]. Its function is as follows. Regulates arginine biosynthesis genes. This Oceanobacillus iheyensis (strain DSM 14371 / CIP 107618 / JCM 11309 / KCTC 3954 / HTE831) protein is Arginine repressor.